The chain runs to 245 residues: 8-amino-3,8-dideoxy-manno-octulosonate cytidylyltransferase (245 aa).

The protein belongs to the KdsB family.

The protein resides in the cytoplasm. It carries out the reaction 8-amino-3,8-dideoxy-alpha-D-manno-octulosonate + CTP = CMP-8-amino-3,8-dideoxy-alpha-D-manno-oct-2-ulosonate + diphosphate. Its pathway is bacterial outer membrane biogenesis; lipopolysaccharide biosynthesis. In terms of biological role, activates KDO8N (a required 8-carbon sugar) for incorporation into bacterial lipopolysaccharide in the Shewanella genus. The polypeptide is 8-amino-3,8-dideoxy-manno-octulosonate cytidylyltransferase (Shewanella frigidimarina (strain NCIMB 400)).